Consider the following 269-residue polypeptide: Formamidopyrimidine-DNA glycosylase (269 aa).

The active-site Schiff-base intermediate with DNA is P2. Residue E3 is the Proton donor of the active site. K57 serves as the catalytic Proton donor; for beta-elimination activity. Residues H90, R109, and R150 each coordinate DNA. The FPG-type zinc finger occupies 235-269 (QVYGRKGEPCRVCGTPVVATKHAQRATFYCRHCQK). The Proton donor; for delta-elimination activity role is filled by R259.

The protein belongs to the FPG family. As to quaternary structure, monomer. The cofactor is Zn(2+).

The enzyme catalyses Hydrolysis of DNA containing ring-opened 7-methylguanine residues, releasing 2,6-diamino-4-hydroxy-5-(N-methyl)formamidopyrimidine.. The catalysed reaction is 2'-deoxyribonucleotide-(2'-deoxyribose 5'-phosphate)-2'-deoxyribonucleotide-DNA = a 3'-end 2'-deoxyribonucleotide-(2,3-dehydro-2,3-deoxyribose 5'-phosphate)-DNA + a 5'-end 5'-phospho-2'-deoxyribonucleoside-DNA + H(+). Involved in base excision repair of DNA damaged by oxidation or by mutagenic agents. Acts as a DNA glycosylase that recognizes and removes damaged bases. Has a preference for oxidized purines, such as 7,8-dihydro-8-oxoguanine (8-oxoG). Has AP (apurinic/apyrimidinic) lyase activity and introduces nicks in the DNA strand. Cleaves the DNA backbone by beta-delta elimination to generate a single-strand break at the site of the removed base with both 3'- and 5'-phosphates. The chain is Formamidopyrimidine-DNA glycosylase from Salmonella arizonae (strain ATCC BAA-731 / CDC346-86 / RSK2980).